Reading from the N-terminus, the 250-residue chain is 26 kDa periplasmic immunogenic protein (250 aa).

An N-terminal signal peptide occupies residues 1 to 28 (MNTRASNFLAASFSTIMLVGAFSLPAFA).

It is found in the periplasm. The sequence is that of 26 kDa periplasmic immunogenic protein (bp26) from Brucella melitensis biotype 1 (strain ATCC 23456 / CCUG 17765 / NCTC 10094 / 16M).